We begin with the raw amino-acid sequence, 336 residues long: Phosphate acyltransferase (336 aa).

This sequence belongs to the PlsX family. As to quaternary structure, homodimer. Probably interacts with PlsY.

Its subcellular location is the cytoplasm. The catalysed reaction is a fatty acyl-[ACP] + phosphate = an acyl phosphate + holo-[ACP]. It functions in the pathway lipid metabolism; phospholipid metabolism. Catalyzes the reversible formation of acyl-phosphate (acyl-PO(4)) from acyl-[acyl-carrier-protein] (acyl-ACP). This enzyme utilizes acyl-ACP as fatty acyl donor, but not acyl-CoA. This is Phosphate acyltransferase from Ectopseudomonas mendocina (strain ymp) (Pseudomonas mendocina).